The primary structure comprises 963 residues: Kinesin-1 heavy chain (963 aa).

Ala2 carries the N-acetylalanine modification. The region spanning 8-325 (NIKVMCRFRP…LLFGQRAKTI (318 aa)) is the Kinesin motor domain. 85–92 (GQTSSGKT) lines the ATP pocket. Lys213 participates in a covalent cross-link: Glycyl lysine isopeptide (Lys-Gly) (interchain with G-Cter in SUMO2). Positions 330–913 (CVNVELTAEQ…EAVRSKNMAR (584 aa)) form a coiled coil. The tract at residues 908-963 (SKNMARRGHSAQIAKPIRPGQHPAASPTHPGAVRGGGSFVQNNQPVGLRGGGGKQA) is disordered. The globular stretch occupies residues 915 to 963 (GHSAQIAKPIRPGQHPAASPTHPGAVRGGGSFVQNNQPVGLRGGGGKQA). Phosphoserine occurs at positions 933 and 945. An Omega-N-methylarginine modification is found at Arg956.

The protein belongs to the TRAFAC class myosin-kinesin ATPase superfamily. Kinesin family. Kinesin subfamily. As to quaternary structure, oligomer composed of two heavy chains and two light chains. Interacts with GRIP1 and PPP1R42. Interacts with SYBU. Interacts with JAKMIP1. Interacts with PLEKHM2. Interacts with ECPAS. Interacts with ZFYVE27. Found in a complex with OGT, RHOT1, RHOT2 and TRAK1. Interacts with APP (via cytoplasmic domain). As to expression, expressed in the brain (at protein level). Expressed in the brain, liver, kidney, spleen, heart, lung and sciatic nerve.

It localises to the cytoplasm. It is found in the cytoskeleton. The protein resides in the cytolytic granule membrane. Its subcellular location is the lysosome membrane. Its function is as follows. Microtubule-dependent motor required for normal distribution of mitochondria and lysosomes. Can induce formation of neurite-like membrane protrusions in non-neuronal cells in a ZFYVE27-dependent manner. Regulates centrosome and nuclear positioning during mitotic entry. During the G2 phase of the cell cycle in a BICD2-dependent manner, antagonizes dynein function and drives the separation of nuclei and centrosomes. Required for anterograde axonal transportation of MAPK8IP3/JIP3 which is essential for MAPK8IP3/JIP3 function in axon elongation. Through binding with PLEKHM2 and ARL8B, directs lysosome movement toward microtubule plus ends. Involved in NK cell-mediated cytotoxicity. Drives the polarization of cytolytic granules and microtubule-organizing centers (MTOCs) toward the immune synapse between effector NK lymphocytes and target cells. This is Kinesin-1 heavy chain from Rattus norvegicus (Rat).